Here is a 317-residue protein sequence, read N- to C-terminus: Beta-ketoacyl-[acyl-carrier-protein] synthase III (317 aa).

Active-site residues include Cys112 and His244. Residues 245–249 (QANLR) form an ACP-binding region. The active site involves Asn274.

It belongs to the thiolase-like superfamily. FabH family. As to quaternary structure, homodimer.

The protein resides in the cytoplasm. The enzyme catalyses malonyl-[ACP] + acetyl-CoA + H(+) = 3-oxobutanoyl-[ACP] + CO2 + CoA. It participates in lipid metabolism; fatty acid biosynthesis. Functionally, catalyzes the condensation reaction of fatty acid synthesis by the addition to an acyl acceptor of two carbons from malonyl-ACP. Catalyzes the first condensation reaction which initiates fatty acid synthesis and may therefore play a role in governing the total rate of fatty acid production. Possesses both acetoacetyl-ACP synthase and acetyl transacylase activities. Its substrate specificity determines the biosynthesis of branched-chain and/or straight-chain of fatty acids. The protein is Beta-ketoacyl-[acyl-carrier-protein] synthase III of Blochmanniella pennsylvanica (strain BPEN).